Reading from the N-terminus, the 94-residue chain is Small ribosomal subunit protein bS20 (94 aa).

Residues 1–10 (MANHASADKR) are compositionally biased toward basic and acidic residues. The tract at residues 1–20 (MANHASADKRNRQRITRTAR) is disordered. Residues 11-20 (NRQRITRTAR) are compositionally biased toward basic residues.

The protein belongs to the bacterial ribosomal protein bS20 family.

In terms of biological role, binds directly to 16S ribosomal RNA. The chain is Small ribosomal subunit protein bS20 from Sorangium cellulosum (strain So ce56) (Polyangium cellulosum (strain So ce56)).